The chain runs to 601 residues: Abscisic acid cluster transcription factor abl7 (601 aa).

The segment at residues 13-40 (CDECRRRKLKCDRVRPQCGTCALSESEC) is a DNA-binding region (zn(2)-C6 fungal-type).

It is found in the nucleus. Its function is as follows. Transcription factor that regulates the expression of the gene cluster that mediates the biosynthesis of abscisic acid (ABA), a phytohormone that acts antagonistically toward salicylic acid (SA), jasmonic acid (JA) and ethylene (ETH) signaling, to impede plant defense responses. This Leptosphaeria maculans (strain JN3 / isolate v23.1.3 / race Av1-4-5-6-7-8) (Blackleg fungus) protein is Abscisic acid cluster transcription factor abl7.